Consider the following 445-residue polypeptide: NADH-quinone oxidoreductase subunit F (445 aa).

Residue 61 to 70 (GRGGAGFSTG) coordinates NAD(+). 174 to 221 (GAGRYICGEETALINSLEGRRANPRSKPPFPATSGVWGKPTCVNNVET) lines the FMN pocket. [4Fe-4S] cluster-binding residues include C351, C354, C357, and C398.

It belongs to the complex I 51 kDa subunit family. In terms of assembly, composed of 13 different subunits. Subunits NuoCD, E, F, and G constitute the peripheral sector of the complex. The cofactor is FMN. [4Fe-4S] cluster serves as cofactor.

The enzyme catalyses a quinone + NADH + 5 H(+)(in) = a quinol + NAD(+) + 4 H(+)(out). NDH-1 shuttles electrons from NADH, via FMN and iron-sulfur (Fe-S) centers, to quinones in the respiratory chain. The immediate electron acceptor for the enzyme in this species is believed to be ubiquinone. Couples the redox reaction to proton translocation (for every two electrons transferred, four hydrogen ions are translocated across the cytoplasmic membrane), and thus conserves the redox energy in a proton gradient. This is NADH-quinone oxidoreductase subunit F (nuoF) from Salmonella typhimurium (strain LT2 / SGSC1412 / ATCC 700720).